Here is a 439-residue protein sequence, read N- to C-terminus: GTPase Obg (439 aa).

One can recognise an Obg domain in the interval 1–159; that stretch reads MAFVDQAEIE…RKLKLELKVL (159 aa). Residues 160–336 form the OBG-type G domain; the sequence is ADVGLVGFPS…LMRLTADLLA (177 aa). Residues 166-173, 191-195, 213-216, 283-286, and 317-319 each bind GTP; these read GFPSAGKS, FTTLS, DLPG, TKMD, and SAL. Residues serine 173 and threonine 193 each coordinate Mg(2+). Residues 358-439 enclose the OCT domain; it reads DFKPEQHNFT…NSDFVFEFSD (82 aa).

The protein belongs to the TRAFAC class OBG-HflX-like GTPase superfamily. OBG GTPase family. As to quaternary structure, monomer. The cofactor is Mg(2+).

It localises to the cytoplasm. In terms of biological role, an essential GTPase which binds GTP, GDP and possibly (p)ppGpp with moderate affinity, with high nucleotide exchange rates and a fairly low GTP hydrolysis rate. Plays a role in control of the cell cycle, stress response, ribosome biogenesis and in those bacteria that undergo differentiation, in morphogenesis control. The chain is GTPase Obg from Leuconostoc citreum (strain KM20).